The following is a 101-amino-acid chain: NAD(P)H-quinone oxidoreductase subunit 4L, chloroplastic (101 aa).

Transmembrane regions (helical) follow at residues 2–22, 32–52, and 61–81; these read IFQS…YGLL, MSLE…SNFV, and VLAL…LAII.

It belongs to the complex I subunit 4L family. As to quaternary structure, NDH is composed of at least 16 different subunits, 5 of which are encoded in the nucleus.

Its subcellular location is the plastid. The protein localises to the chloroplast thylakoid membrane. It catalyses the reaction a plastoquinone + NADH + (n+1) H(+)(in) = a plastoquinol + NAD(+) + n H(+)(out). It carries out the reaction a plastoquinone + NADPH + (n+1) H(+)(in) = a plastoquinol + NADP(+) + n H(+)(out). NDH shuttles electrons from NAD(P)H:plastoquinone, via FMN and iron-sulfur (Fe-S) centers, to quinones in the photosynthetic chain and possibly in a chloroplast respiratory chain. The immediate electron acceptor for the enzyme in this species is believed to be plastoquinone. Couples the redox reaction to proton translocation, and thus conserves the redox energy in a proton gradient. The sequence is that of NAD(P)H-quinone oxidoreductase subunit 4L, chloroplastic from Nephroselmis olivacea (Green alga).